A 218-amino-acid polypeptide reads, in one-letter code: Probable carboxylesterase clz11 (218 aa).

The Involved in the stabilization of the negatively charged intermediate by the formation of the oxyanion hole signature appears at 7–9 (LVG). The active site involves S77.

This sequence belongs to the 'GDXG' lipolytic enzyme family.

The enzyme catalyses a carboxylic ester + H2O = an alcohol + a carboxylate + H(+). It participates in secondary metabolite biosynthesis. Probable carboxylesterase; part of the gene cluster that mediates the biosynthesis of squalestatin S1 (SQS1, also known as zaragozic acid A), a heavily oxidized fungal polyketide that offers potent cholesterol lowering activity by targeting squalene synthase (SS). SQS1 is composed of a 2,8-dioxobicyclic[3.2.1]octane-3,4,5-tricarboxyclic acid core that is connected to two lipophilic polyketide arms. These initial steps feature the priming of an unusual benzoic acid starter unit onto the highly reducing polyketide synthase clz14, followed by oxaloacetate extension and product release to generate a tricarboxylic acid containing product. The phenylalanine ammonia lyase (PAL) clz10 and the acyl-CoA ligase clz12 are involved in transforming phenylalanine into benzoyl-CoA. The citrate synthase-like protein clz17 is involved in connecting the C-alpha-carbons of the hexaketide chain and oxaloacetate to afford the tricarboxylic acid unit. The potential hydrolytic enzymes, clz11 and clz13, are in close proximity to pks2 and may participate in product release. On the other side, the tetraketide arm is synthesized by a the squalestatin tetraketide synthase clz2 and enzymatically esterified to the core in the last biosynthetic step, by the acetyltransferase clz6. The biosynthesis of the tetraketide must involve 3 rounds of chain extension. After the first and second rounds methyl-transfer occurs, and in all rounds of extension the ketoreductase and dehydratase are active. The enoyl reductase and C-MeT of clz2 are not active in the final round of extension. The acetyltransferase clz6 appears to have a broad substrate selectivity for its acyl CoA substrate, allowing the in vitro synthesis of novel squalestatins. The biosynthesis of SQS1 requires several oxidative steps likely performed by oxidoreductases clz3, clz15 and clz16. Finally, in support of the identification of the cluster as being responsible for SQS1 production, the cluster contains a gene encoding a putative squalene synthase (SS) clz20, suggesting a likely mechanism for self-resistance. The chain is Probable carboxylesterase clz11 from Cochliobolus lunatus (Filamentous fungus).